We begin with the raw amino-acid sequence, 255 residues long: Large ribosomal subunit protein uL2 (255 aa).

The disordered stretch occupies residues 211–235 (PHGGGNHQHVGHATTTKRDDPAGKK).

This sequence belongs to the universal ribosomal protein uL2 family.

This chain is Large ribosomal subunit protein uL2 (rpl8), found in Dictyostelium discoideum (Social amoeba).